Reading from the N-terminus, the 101-residue chain is Integration host factor subunit alpha (101 aa).

This sequence belongs to the bacterial histone-like protein family. In terms of assembly, heterodimer of an alpha and a beta chain.

Functionally, this protein is one of the two subunits of integration host factor, a specific DNA-binding protein that functions in genetic recombination as well as in transcriptional and translational control. This chain is Integration host factor subunit alpha, found in Dinoroseobacter shibae (strain DSM 16493 / NCIMB 14021 / DFL 12).